A 429-amino-acid chain; its full sequence is Enolase (429 aa).

Residue glutamine 163 coordinates (2R)-2-phosphoglycerate. The Proton donor role is filled by glutamate 205. Residues aspartate 242, glutamate 286, and aspartate 313 each contribute to the Mg(2+) site. Positions 338, 367, 368, and 389 each coordinate (2R)-2-phosphoglycerate. The Proton acceptor role is filled by lysine 338.

The protein belongs to the enolase family. Mg(2+) serves as cofactor.

The protein resides in the cytoplasm. It is found in the secreted. Its subcellular location is the cell surface. The catalysed reaction is (2R)-2-phosphoglycerate = phosphoenolpyruvate + H2O. Its pathway is carbohydrate degradation; glycolysis; pyruvate from D-glyceraldehyde 3-phosphate: step 4/5. Its function is as follows. Catalyzes the reversible conversion of 2-phosphoglycerate (2-PG) into phosphoenolpyruvate (PEP). It is essential for the degradation of carbohydrates via glycolysis. This is Enolase from Citrifermentans bemidjiense (strain ATCC BAA-1014 / DSM 16622 / JCM 12645 / Bem) (Geobacter bemidjiensis).